The following is a 359-amino-acid chain: Probable dual-specificity RNA methyltransferase RlmN (359 aa).

The active-site Proton acceptor is glutamate 100. One can recognise a Radical SAM core domain in the interval 106–340; sequence TDKRLTVCVS…VSVRASRGRD (235 aa). Cysteines 113 and 345 form a disulfide. Residues cysteine 120, cysteine 124, and cysteine 127 each coordinate [4Fe-4S] cluster. Residues 167–168, serine 197, 226–228, and asparagine 302 contribute to the S-adenosyl-L-methionine site; these read GE and SLH. Cysteine 345 acts as the S-methylcysteine intermediate in catalysis.

It belongs to the radical SAM superfamily. RlmN family. It depends on [4Fe-4S] cluster as a cofactor.

The protein localises to the cytoplasm. The enzyme catalyses adenosine(2503) in 23S rRNA + 2 reduced [2Fe-2S]-[ferredoxin] + 2 S-adenosyl-L-methionine = 2-methyladenosine(2503) in 23S rRNA + 5'-deoxyadenosine + L-methionine + 2 oxidized [2Fe-2S]-[ferredoxin] + S-adenosyl-L-homocysteine. It catalyses the reaction adenosine(37) in tRNA + 2 reduced [2Fe-2S]-[ferredoxin] + 2 S-adenosyl-L-methionine = 2-methyladenosine(37) in tRNA + 5'-deoxyadenosine + L-methionine + 2 oxidized [2Fe-2S]-[ferredoxin] + S-adenosyl-L-homocysteine. In terms of biological role, specifically methylates position 2 of adenine 2503 in 23S rRNA and position 2 of adenine 37 in tRNAs. This Prochlorococcus marinus (strain NATL1A) protein is Probable dual-specificity RNA methyltransferase RlmN.